Consider the following 393-residue polypeptide: NAD(P)H-quinone oxidoreductase subunit H, chloroplastic (393 aa).

It belongs to the complex I 49 kDa subunit family. NDH is composed of at least 16 different subunits, 5 of which are encoded in the nucleus.

The protein resides in the plastid. Its subcellular location is the chloroplast thylakoid membrane. It carries out the reaction a plastoquinone + NADH + (n+1) H(+)(in) = a plastoquinol + NAD(+) + n H(+)(out). The catalysed reaction is a plastoquinone + NADPH + (n+1) H(+)(in) = a plastoquinol + NADP(+) + n H(+)(out). In terms of biological role, NDH shuttles electrons from NAD(P)H:plastoquinone, via FMN and iron-sulfur (Fe-S) centers, to quinones in the photosynthetic chain and possibly in a chloroplast respiratory chain. The immediate electron acceptor for the enzyme in this species is believed to be plastoquinone. Couples the redox reaction to proton translocation, and thus conserves the redox energy in a proton gradient. The protein is NAD(P)H-quinone oxidoreductase subunit H, chloroplastic of Helianthus annuus (Common sunflower).